Consider the following 168-residue polypeptide: Photosystem I assembly protein Ycf3 (168 aa).

TPR repeat units follow at residues 35–68 (AFTY…EIDP), 72–105 (SYIL…NPFL), and 120–153 (GEQA…TPGN).

Belongs to the Ycf3 family.

The protein localises to the plastid. It is found in the chloroplast thylakoid membrane. Its function is as follows. Essential for the assembly of the photosystem I (PSI) complex. May act as a chaperone-like factor to guide the assembly of the PSI subunits. In Nandina domestica (Heavenly bamboo), this protein is Photosystem I assembly protein Ycf3.